The chain runs to 160 residues: Small ribosomal subunit protein uS7 (160 aa).

It belongs to the universal ribosomal protein uS7 family. In terms of assembly, part of the 30S ribosomal subunit. Contacts proteins S9 and S11.

Its function is as follows. One of the primary rRNA binding proteins, it binds directly to 16S rRNA where it nucleates assembly of the head domain of the 30S subunit. Is located at the subunit interface close to the decoding center, probably blocks exit of the E-site tRNA. This is Small ribosomal subunit protein uS7 from Anaplasma marginale (strain Florida).